The following is a 302-amino-acid chain: Lysosomal thioesterase PPT2 (302 aa).

Residues 1-27 form the signal peptide; it reads MPGLWRQRLPSAWALLLLPFLPLLLPA. Residue Asn-60 is glycosylated (N-linked (GlcNAc...) asparagine). 2 disulfides stabilise this stretch: Cys-109–Cys-117 and Cys-165–Cys-176. Ser-111 serves as the catalytic Nucleophile. N-linked (GlcNAc...) asparagine glycans are attached at residues Asn-190 and Asn-206. Asp-228 is a catalytic residue. A glycan (N-linked (GlcNAc...) asparagine) is linked at Asn-245. Residues Cys-276 and Cys-296 are joined by a disulfide bond. His-283 is an active-site residue. N-linked (GlcNAc...) asparagine glycosylation occurs at Asn-289.

The protein belongs to the palmitoyl-protein thioesterase family.

The protein localises to the lysosome. The catalysed reaction is hexadecanoyl-CoA + H2O = hexadecanoate + CoA + H(+). It catalyses the reaction S-hexadecanoyl-N-acetylcysteamine + H2O = N-acetylcysteamine + hexadecanoate + H(+). Its function is as follows. Catalyzes the cleavage of thioester bonds from S-palmitoyl-CoA or S-palmitoyl-N-acetylcysteamine (unbranched structures) but does not have activity against palmitoylcysteine or palmitoylated proteins, branched structures or bulky head groups. Conversely, hydrolyzes both long and short chain fatty acyl-CoA substrate. The chain is Lysosomal thioesterase PPT2 (Ppt2) from Rattus norvegicus (Rat).